The primary structure comprises 754 residues: Relaxin receptor 2 (754 aa).

Topologically, residues 1–416 (MIVFLVFKHL…SSFEDLLANN (416 aa)) are extracellular. The LDL-receptor class A domain occupies 44 to 81 (SCQKGYFPCGNLTKCLPRAFHCDGKDDCGNGADEENCG). Cystine bridges form between Cys45–Cys58, Cys52–Cys71, and Cys65–Cys80. N-linked (GlcNAc...) asparagine glycosylation is present at Asn54. Residue Asn138 is glycosylated (N-linked (GlcNAc...) asparagine). 10 LRR repeats span residues 138-159 (NVTL…VFIK), 162-183 (KLKK…AFFG), 186-207 (NLQI…IFKD), 210-231 (QLTW…LFTG), 234-255 (SLFF…MCAQ), 258-279 (QLNW…TFLS), 282-303 (SLTV…TFSS), 306-327 (NLGE…LFKD), 330-351 (LLQK…QFES), and 354-375 (QLQS…MFQP). A glycan (N-linked (GlcNAc...) asparagine) is linked at Asn274. Asn335 is a glycosylation site (N-linked (GlcNAc...) asparagine). The N-linked (GlcNAc...) asparagine glycan is linked to Asn378. Residues 417 to 437 (ILRIFVWVIAFITCFGNLFVI) traverse the membrane as a helical segment. Residues 438–455 (GMRSFIKAENTTHAMSIK) are Cytoplasmic-facing. The chain crosses the membrane as a helical span at residues 456–476 (ILCCADCLMGVYLFFVGIFDI). Residues 477-495 (KYRGQYQKYALLWMESVQC) lie on the Extracellular side of the membrane. Cys495 and Cys573 are joined by a disulfide. A helical transmembrane segment spans residues 496-518 (RLMGFLAMLSTEVSVLLLTYLTL). The Cytoplasmic portion of the chain corresponds to 519–537 (EKFLVIVFPFSNIRPGKRQ). Residues 538-558 (TSVILICIWMAGFLIAVIPFW) form a helical membrane-spanning segment. At 559–592 (NKDYFGNFYGKNGVCFPLYYDQTEDIGSKGYSLG) the chain is on the extracellular side. The helical transmembrane segment at 593–613 (IFLGVNLLAFLIIVFSYITMF) threads the bilayer. Over 614–639 (CSIQKTALQTTEVRNCFGREVAVANR) the chain is Cytoplasmic. Residues 640 to 660 (FFFIVFSDAICWIPVFVVKIL) form a helical membrane-spanning segment. Over 661–670 (SLFRVEIPDT) the chain is Extracellular. The chain crosses the membrane as a helical span at residues 671-691 (MTSWIVIFFLPVNSALNPILY). The Cytoplasmic portion of the chain corresponds to 692–754 (TLTTNFFKDK…LGDSIMKPVS (63 aa)).

Belongs to the G-protein coupled receptor 1 family. In terms of tissue distribution, expressed mainly in the brain, kidney, muscle, testis, thyroid, uterus, peripheral blood cells and bone marrow.

It localises to the cell membrane. Its function is as follows. Receptor for relaxin. The activity of this receptor is mediated by G proteins leading to stimulation of adenylate cyclase and an increase of cAMP. May also be a receptor for Leydig insulin-like peptide (INSL3). The polypeptide is Relaxin receptor 2 (RXFP2) (Homo sapiens (Human)).